Consider the following 353-residue polypeptide: GDSL esterase/lipase At5g03810 (353 aa).

Positions 1–24 (MKMFITMSMCLSVIACFYAGVGTG) are cleaved as a signal peptide. Serine 37 functions as the Nucleophile in the catalytic mechanism. N-linked (GlcNAc...) asparagine glycans are attached at residues asparagine 100, asparagine 255, asparagine 256, asparagine 260, and asparagine 320. Catalysis depends on residues aspartate 328 and histidine 331.

This sequence belongs to the 'GDSL' lipolytic enzyme family.

It is found in the secreted. In Arabidopsis thaliana (Mouse-ear cress), this protein is GDSL esterase/lipase At5g03810.